Consider the following 224-residue polypeptide: Aminopyrimidine aminohydrolase (224 aa).

Residue Asp-44 coordinates substrate. Residue Cys-135 is the Nucleophile of the active site. 2 residues coordinate substrate: Tyr-139 and Tyr-165. Glu-207 acts as the Proton donor in catalysis.

Belongs to the TenA family. As to quaternary structure, homotetramer.

The enzyme catalyses 4-amino-5-aminomethyl-2-methylpyrimidine + H2O = 4-amino-5-hydroxymethyl-2-methylpyrimidine + NH4(+). It carries out the reaction thiamine + H2O = 5-(2-hydroxyethyl)-4-methylthiazole + 4-amino-5-hydroxymethyl-2-methylpyrimidine + H(+). The protein operates within cofactor biosynthesis; thiamine diphosphate biosynthesis. In terms of biological role, catalyzes an amino-pyrimidine hydrolysis reaction at the C5' of the pyrimidine moiety of thiamine compounds, a reaction that is part of a thiamine salvage pathway. Thus, catalyzes the conversion of 4-amino-5-aminomethyl-2-methylpyrimidine to 4-amino-5-hydroxymethyl-2-methylpyrimidine (HMP). To a lesser extent, is also able to catalyze the hydrolytic cleavage of thiamine; however, this thiaminase activity is unlikely to be physiologically relevant. Therefore, is involved in the regeneration of the thiamine pyrimidine from thiamine degraded products present in the environment, rather than in thiamine degradation. The polypeptide is Aminopyrimidine aminohydrolase (Halalkalibacterium halodurans (strain ATCC BAA-125 / DSM 18197 / FERM 7344 / JCM 9153 / C-125) (Bacillus halodurans)).